Here is a 306-residue protein sequence, read N- to C-terminus: Acetyl-coenzyme A carboxylase carboxyl transferase subunit beta (306 aa).

In terms of domain architecture, CoA carboxyltransferase N-terminal spans 25-294; it reads LWIKDPTSGE…VFNPSDPSPT (270 aa). Positions 286 to 306 are disordered; it reads FNPSDPSPTDSQTSLSTTKAA. Positions 288–306 are enriched in low complexity; it reads PSDPSPTDSQTSLSTTKAA.

Belongs to the AccD/PCCB family. As to quaternary structure, acetyl-CoA carboxylase is a heterohexamer composed of biotin carboxyl carrier protein (AccB), biotin carboxylase (AccC) and two subunits each of ACCase subunit alpha (AccA) and ACCase subunit beta (AccD).

The protein resides in the cytoplasm. It catalyses the reaction N(6)-carboxybiotinyl-L-lysyl-[protein] + acetyl-CoA = N(6)-biotinyl-L-lysyl-[protein] + malonyl-CoA. It participates in lipid metabolism; malonyl-CoA biosynthesis; malonyl-CoA from acetyl-CoA: step 1/1. In terms of biological role, component of the acetyl coenzyme A carboxylase (ACC) complex. Biotin carboxylase (BC) catalyzes the carboxylation of biotin on its carrier protein (BCCP) and then the CO(2) group is transferred by the transcarboxylase to acetyl-CoA to form malonyl-CoA. The protein is Acetyl-coenzyme A carboxylase carboxyl transferase subunit beta of Bartonella grahamii (strain as4aup).